Here is a 185-residue protein sequence, read N- to C-terminus: Elongation factor P (185 aa).

This sequence belongs to the elongation factor P family.

Its subcellular location is the cytoplasm. It participates in protein biosynthesis; polypeptide chain elongation. In terms of biological role, involved in peptide bond synthesis. Stimulates efficient translation and peptide-bond synthesis on native or reconstituted 70S ribosomes in vitro. Probably functions indirectly by altering the affinity of the ribosome for aminoacyl-tRNA, thus increasing their reactivity as acceptors for peptidyl transferase. The polypeptide is Elongation factor P (Clostridium novyi (strain NT)).